Reading from the N-terminus, the 424-residue chain is Glutamyl-tRNA reductase (424 aa).

Substrate-binding positions include 49 to 52 (TCNR), Ser-109, 114 to 116 (EDQ), and Gln-120. Residue Cys-50 is the Nucleophile of the active site. 189–194 (GFGKMS) serves as a coordination point for NADP(+).

Belongs to the glutamyl-tRNA reductase family. Homodimer.

The catalysed reaction is (S)-4-amino-5-oxopentanoate + tRNA(Glu) + NADP(+) = L-glutamyl-tRNA(Glu) + NADPH + H(+). It functions in the pathway porphyrin-containing compound metabolism; protoporphyrin-IX biosynthesis; 5-aminolevulinate from L-glutamyl-tRNA(Glu): step 1/2. In terms of biological role, catalyzes the NADPH-dependent reduction of glutamyl-tRNA(Glu) to glutamate 1-semialdehyde (GSA). The polypeptide is Glutamyl-tRNA reductase (Alkaliphilus metalliredigens (strain QYMF)).